The primary structure comprises 115 residues: Probable malate:quinone oxidoreductase (115 aa).

The segment at 88-115 is disordered; it reads QMPAAAPTATAKPAETPREASPQHDMAL. The segment covering 90-101 has biased composition (low complexity); the sequence is PAAAPTATAKPA. Residues 102–115 are compositionally biased toward basic and acidic residues; the sequence is ETPREASPQHDMAL.

It belongs to the MQO family. The cofactor is FAD.

It carries out the reaction (S)-malate + a quinone = a quinol + oxaloacetate. It participates in carbohydrate metabolism; tricarboxylic acid cycle; oxaloacetate from (S)-malate (quinone route): step 1/1. This chain is Probable malate:quinone oxidoreductase (mqo), found in Klebsiella pneumoniae.